We begin with the raw amino-acid sequence, 452 residues long: Protoheme IX farnesyltransferase, mitochondrial (452 aa).

The N-terminal 27 residues, 1–27 (MSLVIQPLLMRALNPNLSSILISGRGF), are a transit peptide targeting the mitochondrion. Transmembrane regions (helical) follow at residues 152 to 172 (VLVM…ATVL), 235 to 255 (ILWL…IALY), 267 to 287 (IINT…GWAA), 291 to 311 (LSHP…FPHF), 341 to 361 (VALR…YFNV), 364 to 386 (WYYQ…KFYF), and 417 to 437 (TFWV…LHKK).

Belongs to the UbiA prenyltransferase family.

The protein resides in the mitochondrion membrane. Converts protoheme IX and farnesyl diphosphate to heme O. In Kluyveromyces lactis (strain ATCC 8585 / CBS 2359 / DSM 70799 / NBRC 1267 / NRRL Y-1140 / WM37) (Yeast), this protein is Protoheme IX farnesyltransferase, mitochondrial (COX10).